The chain runs to 74 residues: Conotoxin VxVIA (74 aa).

The first 22 residues, 1-22 (MKLTCVLIIAVLFLTAYQLATA), serve as a signal peptide directing secretion. Positions 23 to 47 (ASHAKGKQKHRALRPADKHFRFTKR) are excised as a propeptide. 3 disulfide bridges follow: cysteine 48-cysteine 62, cysteine 55-cysteine 66, and cysteine 61-cysteine 73.

In terms of tissue distribution, expressed by the venom duct.

It is found in the secreted. Functionally, when injected intracranially in mice, induces a series of symptoms such as quivering, climbing, scratching, barrel rolling and paralysis of limbs. Unexpectedly, no effect is observed on ionic currents when tested on locust DUM neuron. In Conus vexillum (Flag cone), this protein is Conotoxin VxVIA.